Here is a 639-residue protein sequence, read N- to C-terminus: Lactose permease (639 aa).

Residues 1–473 (MKDITKQKFS…AEIVIELEKT (473 aa)) are permease. 12 helical membrane-spanning segments follow: residues 20-40 (FALG…YFIV), 59-79 (IGLI…IDPI), 99-119 (VIGA…IFGL), 124-144 (WIAF…FYSF), 176-196 (IGWN…TFIA), 207-227 (WFGF…AVAF), 264-284 (LAYL…FYFF), 294-314 (FWIA…LYPV), 322-342 (KVLF…FIFG), 347-367 (MMVT…VVVL), 398-418 (ITGA…GMTG), and 433-453 (FEIY…VIFL). Positions 505–609 (NEVDGNTLTG…QDDIIMYFTQ (105 aa)) constitute a PTS EIIA type-1 domain. H557 is subject to Phosphohistidine; by HPr.

The protein in the N-terminal section; belongs to the sodium:galactoside symporter (TC 2.A.2) family.

It localises to the cell membrane. In terms of biological role, responsible for transport of beta-galactosides into the cell, with the concomitant uptake of protons (symport system), and also for transport of homologous and heterologous exchange of beta-galactosides. This chain is Lactose permease (lacS), found in Leuconostoc lactis.